The chain runs to 378 residues: Squalene methyltransferase 1 (378 aa).

A helical membrane pass occupies residues 17-37 (LLTWKGVAGLVVAITLGYLII).

Belongs to the class I-like SAM-binding methyltransferase superfamily. Erg6/SMT family.

The protein localises to the microsome membrane. It carries out the reaction squalene + 2 S-adenosyl-L-methionine = 3,22-dimethyl-1,2,23,24-tetradehydro-2,3,22,23-tetrahydrosqualene + 2 S-adenosyl-L-homocysteine + 2 H(+). In terms of biological role, converts squalene to mono- and dimethyl derivatives, but not to tri- and tetramethylated products. Unable to methylate cycloartenol, zymosterol or lanosterol. Methylates both C-3 and C22 positions, but only C-3 position in monomethylated products. Produces mainly dimethylated squalene. The sequence is that of Squalene methyltransferase 1 (TMT-1) from Botryococcus braunii (Green alga).